Here is a 427-residue protein sequence, read N- to C-terminus: Light-independent protochlorophyllide reductase subunit N (427 aa).

Cys-30, Cys-55, and Cys-116 together coordinate [4Fe-4S] cluster.

The protein belongs to the BchN/ChlN family. In terms of assembly, protochlorophyllide reductase is composed of three subunits; BchL, BchN and BchB. Forms a heterotetramer of two BchB and two BchN subunits. The cofactor is [4Fe-4S] cluster.

It catalyses the reaction chlorophyllide a + oxidized 2[4Fe-4S]-[ferredoxin] + 2 ADP + 2 phosphate = protochlorophyllide a + reduced 2[4Fe-4S]-[ferredoxin] + 2 ATP + 2 H2O. Its pathway is porphyrin-containing compound metabolism; bacteriochlorophyll biosynthesis (light-independent). Component of the dark-operative protochlorophyllide reductase (DPOR) that uses Mg-ATP and reduced ferredoxin to reduce ring D of protochlorophyllide (Pchlide) to form chlorophyllide a (Chlide). This reaction is light-independent. The NB-protein (BchN-BchB) is the catalytic component of the complex. The sequence is that of Light-independent protochlorophyllide reductase subunit N from Rhodopseudomonas palustris (strain BisA53).